Here is a 21-residue protein sequence, read N- to C-terminus: Thioredoxin (21 aa).

At K3 the chain carries N6-acetyllysine. K8 carries the N6-succinyllysine modification.

This sequence belongs to the thioredoxin family. As to quaternary structure, homodimer; disulfide-linked. Interacts with TXNIP through the redox-active site. Interacts with MAP3K5 and CASP3. Interacts with APEX1; the interaction stimulates the FOS/JUN AP-1 DNA-binding activity in a redox-dependent manner.

The protein resides in the nucleus. Its subcellular location is the cytoplasm. It localises to the secreted. Its function is as follows. Participates in various redox reactions through the reversible oxidation of its active center dithiol to a disulfide and catalyzes dithiol-disulfide exchange reactions. Plays a role in the reversible S-nitrosylation of cysteine residues in target proteins, and thereby contributes to the response to intracellular nitric oxide. Nitrosylates the active site Cys of CASP3 in response to nitric oxide (NO), and thereby inhibits caspase-3 activity. Induces the FOS/JUN AP-1 DNA binding activity in ionizing radiation (IR) cells through its oxidation/reduction status and stimulates AP-1 transcriptional activity. The protein is Thioredoxin (TXN) of Canis lupus familiaris (Dog).